The sequence spans 285 residues: Malectin (285 aa).

A signal peptide spans 1–26 (MRRVTLHCAARLVIAALWLLVEVCRA). The Lumenal portion of the chain corresponds to 27–262 (ESGAQSLAER…TPNPYATDNS (236 aa)). 5 residues coordinate a carbohydrate: tyrosine 71, tyrosine 93, tyrosine 120, phenylalanine 121, and aspartate 190. Positions 209 to 258 (KLQPHPGLEKREEEEEEEEEGEGPEGEKKSASTSPKNPVRSGPRTPNPYA) are disordered. The span at 220–232 (EEEEEEEEEGEGP) shows a compositional bias: acidic residues. N-linked (GlcNAc...) asparagine glycosylation is present at asparagine 261. A helical membrane pass occupies residues 263–283 (SLMFPILVAFGVFIPTLFCLC). Residues 284–285 (RL) are Cytoplasmic-facing.

It belongs to the malectin family.

It localises to the endoplasmic reticulum membrane. Carbohydrate-binding protein with a strong ligand preference for Glc2-N-glycan. May play a role in the early steps of protein N-glycosylation. The protein is Malectin of Danio rerio (Zebrafish).